An 86-amino-acid polypeptide reads, in one-letter code: Conotoxin Ec15a (86 aa).

The signal sequence occupies residues 1–23; sequence MEKLTILILVATVLLAIQVLGQG. The propeptide occupies 24–49; sequence EGEKPPKEWVQQYAAKRLWALMKGPR. Gln50 is modified (pyrrolidone carboxylic acid).

The protein belongs to the conotoxin O2 superfamily. Post-translationally, contains 4 disulfide bonds. Expressed by the venom duct.

It localises to the secreted. The polypeptide is Conotoxin Ec15a (Conus emaciatus (False virgin cone)).